Here is a 1194-residue protein sequence, read N- to C-terminus: DNA polymerase catalytic subunit (1194 aa).

Belongs to the DNA polymerase type-B family. Forms a complex with the ssDNA-binding protein, the DNA polymerase processivity factor, and the alkaline exonuclease. Interacts with the helicase-primase complex composed of the primase, the helicase and the primase-associated factor; this interaction may coordinate leading and lagging strand DNA synthesis at the replication fork.

The protein localises to the host nucleus. The catalysed reaction is DNA(n) + a 2'-deoxyribonucleoside 5'-triphosphate = DNA(n+1) + diphosphate. It carries out the reaction Endonucleolytic cleavage to 5'-phosphomonoester.. Its function is as follows. Replicates viral genomic DNA. The replication complex is composed of six viral proteins: the DNA polymerase, processivity factor, primase, primase-associated factor, helicase, and ssDNA-binding protein. Additionally, the polymerase contains an intrinsic ribonuclease H (RNase H) activity that specifically degrades RNA/DNA heteroduplexes or duplex DNA substrates in the 5' to 3' direction. Therefore, it can catalyze the excision of the RNA primers that initiate the synthesis of Okazaki fragments at a replication fork during viral DNA replication. The chain is DNA polymerase catalytic subunit from Varicella-zoster virus (strain Oka vaccine) (HHV-3).